The chain runs to 393 residues: Potassium channel subfamily K member 4 (393 aa).

Residues 1-3 (MRS) lie on the Cytoplasmic side of the membrane. A helical transmembrane segment spans residues 4–24 (TTLLALLALVLLYLVSGALVF). The Extracellular portion of the chain corresponds to 25–87 (RALEQPHEQQ…NSTSNSSHSA (63 aa)). 2 N-linked (GlcNAc...) asparagine glycosylation sites follow: asparagine 78 and asparagine 82. The segment at residues 88-102 (WDLGSAFFFSGTIIT) is an intramembrane region (helical). K(+) contacts are provided by threonine 103, isoleucine 104, glycine 105, and tyrosine 106. Residues 103–108 (TIGYGN) are selectivity filter 1. The stretch at 103–109 (TIGYGNV) is an intramembrane region. Topologically, residues 110–117 (ALRTDAGR) are extracellular. A helical membrane pass occupies residues 118–150 (LFCIFYALVGIPLFGILLAGVGDRLGSSLRHGI). Topologically, residues 151–172 (GHIEAIFLKWHVPPELVRVLSA) are cytoplasmic. The chain crosses the membrane as a helical span at residues 173–194 (MLFLLIGCLLFVLTPTFVFCYM). Residues 195–199 (EDWSK) lie on the Extracellular side of the membrane. The helical intramembrane region spans 200–213 (LEAIYFVIVTLTTV). K(+) contacts are provided by threonine 212, valine 213, glycine 214, and phenylalanine 215. A selectivity filter 2 region spans residues 212-217 (TVGFGD). An intramembrane segment occupies 214–219 (GFGDYV). The Extracellular segment spans residues 220–233 (AGADPRQDSPAYQP). The chain crosses the membrane as a helical span at residues 234–260 (LVWFWILLGLAYFASVLTTIGNWLRVV). Topologically, residues 261–393 (SRRTRAEMGG…GRPRDKGVPV (133 aa)) are cytoplasmic. Residues 285–393 (RVTQRAGPAA…GRPRDKGVPV (109 aa)) form a disordered region. Residues 319 to 332 (SPSPPEKAQPPSPP) are compositionally biased toward pro residues. Residues 365–384 (PRGRRRPNPPRKPVRPRGPG) are compositionally biased toward basic residues.

Belongs to the two pore domain potassium channel (TC 1.A.1.8) family. As to quaternary structure, homodimer; disulfide-linked. Forms heterodimers with other 2-pore domain K(+) channel subunits, such as KCNK2 and KCNK10. In terms of processing, N-glycosylated.

The protein resides in the cell membrane. It localises to the cell projection. It is found in the axon. The catalysed reaction is K(+)(in) = K(+)(out). It catalyses the reaction Rb(+)(in) = Rb(+)(out). It carries out the reaction Cs(+)(in) = Cs(+)(out). Activated by mechanical stretch and arachidonic acid. Functionally, k(+) channel that conducts voltage-dependent outward rectifying currents upon membrane depolarization. Voltage sensing is coupled to K(+) electrochemical gradient in an 'ion flux gating' mode where outward but not inward ion flow opens the gate. Converts to voltage-independent 'leak' conductance mode upon stimulation by various stimuli including mechanical membrane stretch, basic pH, heat and lipids. Homo- and heterodimerizes to form functional channels with distinct regulatory and gating properties. At trigeminal A-beta afferent nerves, the heterodimer of KCNK2/TREK-1 and KCNK4/TRAAK is mostly coexpressed at nodes of Ranvier where it conducts voltage-independent mechanosensitive and thermosensitive currents, allowing rapid action potential repolarization, high speed and high frequence saltatory conduction on myelinated nerves to ensure prompt sensory responses. Permeable to other monovalent cations such as Rb(+) and Cs(+). The chain is Potassium channel subfamily K member 4 from Homo sapiens (Human).